A 257-amino-acid chain; its full sequence is Probable 6-phosphogluconolactonase (257 aa).

This sequence belongs to the glucosamine/galactosamine-6-phosphate isomerase family. 6-phosphogluconolactonase subfamily.

It carries out the reaction 6-phospho-D-glucono-1,5-lactone + H2O = 6-phospho-D-gluconate + H(+). Its pathway is carbohydrate degradation; pentose phosphate pathway; D-ribulose 5-phosphate from D-glucose 6-phosphate (oxidative stage): step 2/3. Functionally, hydrolysis of 6-phosphogluconolactone to 6-phosphogluconate. The protein is Probable 6-phosphogluconolactonase of Schizosaccharomyces pombe (strain 972 / ATCC 24843) (Fission yeast).